The primary structure comprises 1048 residues: MGEIEQKPTPASRLGAPENSGISTLERGQKPPPTPSGKLMTVKIQMLDDTQEAFEVPQRAPGKVLFDAVCNHLNLVEGDYFGLEFPDHRKIVVWLDLLKPIVKQIRRPKHVVVKFVVKFFPPDHTQLQEELTRYLFALQVKQDLAQGRLTCNDTSAALLISHIVQSEIGDFDEALDREHLAKNKYVPQQDALEDRIMEFHHSHVGQTPAESDFQLLEVARRLEMYGIRLHPAKDREGTKINLAVANTGILVFQGFTKINAFNWAKVRKLSFKRKRFLIKLRPDVNSSYQDTLEFLMAGRDFCKSFWKICVEHHAFFRLFEEPKPKPKPVLFSRGSSFRFSGRTQKQVLDYVKEGGHKKVQFERKHSKIHSTRSLVSQPTAPNSEVPKQSPQSASLTFGEGTESPGGQSCQQAKETKACTLELGPHQSPALPKSPPGSKAADGTTVVPPEEEEEEEGGKDGIRPSNPQPPQPSTGSLTGSPHLSELSINSQGGAAPANVTLSPNLSPDNKQASPLISPLLNDQACPRTDDEEEGRRKRFPTDKAYYIAKEVSTTERTYLKDLEVIASWFQSTVSKEDSMPEALKSLIFPNFEPLHKFHTNFLKEIEQRLALWEGRSNAHVRGDYQRIGDVMLKNIQGMKHLAAHLWKHSEALEALETSIKGSRRLEHFCRDFELQKVCYLPLNTFLLRPLHRLMHYKHVLERLCKHHPPNHADFRDCRAALAEITEMVAQLHGTMIKMENFQKLHELKKDLIGIDNLVTPGREFIRLGSLSKLSGKGLQQRMFFLFNDVLLYTSRGLTASNQFKVHGQLPLYGMTIEESEEEWGVPHCLTLRGQRQSIIVAASSRSEMEKWMEDIQMAIDLAEKSNGPTPELLASSPPDNKSPDEATAADQESEDDLSASRTSLERQAPHRGNTMVHVCWHRSTSVSMVDFSIAVENQLSGNLLRKFKNSNGWQKLWVVFTNFCLFFYKSHQDSHPLASLPLLGYSLTIPSESENIHKDYVFKLHFKSHVYYFRAESEYTFERWMEVIRSATSSASRAHILSHKESHLY.

Residues 1 to 37 (MGEIEQKPTPASRLGAPENSGISTLERGQKPPPTPSG) form a disordered region. Phosphoserine occurs at positions 20 and 23. Thr24 carries the phosphothreonine modification. An FERM domain is found at 40–320 (MTVKIQMLDD…EHHAFFRLFE (281 aa)). Phosphoserine occurs at positions 340, 373, 389, 403, 427, 433, and 437. Positions 361–536 (FERKHSKIHS…TDDEEEGRRK (176 aa)) are disordered. A compositionally biased stretch (polar residues) spans 371–395 (TRSLVSQPTAPNSEVPKQSPQSASL). 2 stretches are compositionally biased toward polar residues: residues 472–491 (STGSLTGSPHLSELSINSQG) and 498–513 (VTLSPNLSPDNKQASP). Phosphoserine is present on residues Ser512 and Ser516. The region spanning 542–733 (KAYYIAKEVS…TEMVAQLHGT (192 aa)) is the DH domain. The PH 1 domain maps to 762-859 (EFIRLGSLSK…WMEDIQMAID (98 aa)). Phosphoserine occurs at positions 836, 875, and 881. Positions 865–907 (NGPTPELLASSPPDNKSPDEATAADQESEDDLSASRTSLERQA) are disordered. Residue Thr886 is modified to Phosphothreonine. Residues Ser892, Ser899, and Ser902 each carry the phosphoserine modification. The PH 2 domain occupies 935-1032 (ENQLSGNLLR…WMEVIRSATS (98 aa)).

As to quaternary structure, interacts with CADM1. Interacts with RAC1. Detected in brain cortex, hippocampus, striatum, olfactory bulb, cerebellum and hindbrain (at protein level).

The protein localises to the cell membrane. The protein resides in the synapse. It is found in the synaptosome. Its subcellular location is the cytoplasm. It localises to the cytosol. The protein localises to the cell projection. The protein resides in the filopodium. It is found in the dendrite. Its subcellular location is the dendritic spine. Functionally, functions as a guanine nucleotide exchange factor for RAC1. May play a role in semaphorin signaling. Plays a role in the assembly and disassembly of dendritic filopodia, the formation of dendritic spines, regulation of dendrite length and ultimately the formation of synapses. This Mus musculus (Mouse) protein is FERM, ARHGEF and pleckstrin domain-containing protein 1 (Farp1).